Here is an 86-residue protein sequence, read N- to C-terminus: MPQFQTWEEFSRAAEKLYLADPMKVRVVLKYRHVDGNLCIKVTDDLVCLVYRTDQAQDVKKIEKFHSQLMRLMVAKESRNVTMETE.

This sequence belongs to the SRP9 family. Heterodimer with SRP14; binds RNA as heterodimer. Component of a signal recognition particle complex that consists of a 7SL RNA molecule of 300 nucleotides and six protein subunits: SRP72, SRP68, SRP54, SRP19, SRP14 and SRP9.

The protein localises to the cytoplasm. Its function is as follows. Component of the signal recognition particle (SRP) complex, a ribonucleoprotein complex that mediates the cotranslational targeting of secretory and membrane proteins to the endoplasmic reticulum (ER). SRP9 together with SRP14 and the Alu portion of the SRP RNA, constitutes the elongation arrest domain of SRP. The complex of SRP9 and SRP14 is required for SRP RNA binding. This Mus musculus (Mouse) protein is Signal recognition particle 9 kDa protein (Srp9).